A 309-amino-acid chain; its full sequence is MSFPDITPELKAAMPELRGRLLSNEPLAPLTWFRVGGPAQVLFTPADEDDLGYFLPRLPAEIPVMCLGLGSNLIVRDGGLPGVAIRLSPRGFGEHRVEGEMVHAGAAALDKRVAETAAAAQLGGLEFYYGIPGSIGGALRMNAGANGRETKDVLIDATAYDRSGTRKLFDNAAMQFSYRHSGADPALIFTSARLRGTPATPDHIRAKMNEVQAHRELAQPIREKTGGSTFKNPPGQSAWRLIDAAGCRGLKIGGAQVSEMHCNFLINTGEATAADIETLGETVRARVKAQSGVELQWEIKRIGVAPGKG.

The region spanning 34–199 is the FAD-binding PCMH-type domain; the sequence is RVGGPAQVLF…TSARLRGTPA (166 aa). Residue arginine 179 is part of the active site. Serine 228 (proton donor) is an active-site residue. Glutamate 298 is an active-site residue.

It belongs to the MurB family. Requires FAD as cofactor.

It is found in the cytoplasm. It catalyses the reaction UDP-N-acetyl-alpha-D-muramate + NADP(+) = UDP-N-acetyl-3-O-(1-carboxyvinyl)-alpha-D-glucosamine + NADPH + H(+). It participates in cell wall biogenesis; peptidoglycan biosynthesis. Cell wall formation. The chain is UDP-N-acetylenolpyruvoylglucosamine reductase from Rhodopseudomonas palustris (strain ATCC BAA-98 / CGA009).